The following is a 374-amino-acid chain: 5-methylthioribulose-1-phosphate isomerase (374 aa).

Belongs to the RuBisCO large chain family. Type IV subfamily.

It carries out the reaction 5-(methylsulfanyl)-D-ribulose 1-phosphate = S-methyl-1-thio-D-xylulose 5-phosphate. It catalyses the reaction 5-(methylsulfanyl)-D-ribulose 1-phosphate = 1-(methylsulfanyl)ribulose 5-phosphate. It functions in the pathway amino-acid biosynthesis; L-methionine biosynthesis via salvage pathway. Its pathway is metabolic intermediate biosynthesis; 1-deoxy-D-xylulose 5-phosphate biosynthesis. Catalyzes the conversion of 5-methylthio-D-ribulose 1-phosphate (MTRu-1P) to a 3:1 mixture of 1-methylthioxylulose 5-phosphate (MTXu-5P) and 1-methylthioribulose 5-phosphate (MTRu-5P). Involved in the MTA-isoprenoid shunt of the methionine salvage pathway. The polypeptide is 5-methylthioribulose-1-phosphate isomerase (Rhodospirillum rubrum (strain ATCC 11170 / ATH 1.1.1 / DSM 467 / LMG 4362 / NCIMB 8255 / S1)).